Reading from the N-terminus, the 106-residue chain is Ig kappa chain C region, A allele (106 aa).

Positions 5–102 constitute an Ig-like domain; sequence PTVSIFPPSM…SSSPVVKSFN (98 aa). A disulfide bridge links C26 with C86.

The protein is Ig kappa chain C region, A allele of Rattus norvegicus (Rat).